The sequence spans 230 residues: Demethylluteothin O-methyltransferase (230 aa).

It belongs to the methyltransferase superfamily.

It catalyses the reaction demethylluteothin + S-adenosyl-L-methionine = luteothin + S-adenosyl-L-homocysteine. Its pathway is antibiotic biosynthesis. The protein operates within polyketide biosynthesis. In terms of biological role, methyltransferase involved in the biosynthesis of the antibiotic aureothin, a nitroaryl polyketide metabolite with antifungal, cytotoxic and insecticidal activities. Catalyzes the methylation of demethylluteothin to luteothin (also called deoxyaureothin). Is specific for its gamma-pyrone substrate, and does not act on the alpha-pyrone isomer. The protein is Demethylluteothin O-methyltransferase of Streptomyces thioluteus.